The sequence spans 1292 residues: ABC multidrug transporter MDR5 (1292 aa).

Residues 1–43 are disordered; sequence MTEEPKPVTPVLRDGEAGLDTTAPTEAGSLGEEAPKKEADGIV. Helical transmembrane passes span 79-99 and 128-148; these read ICGF…TIIF and LWFV…TICF. The ABC transmembrane type-1 1 domain maps to 81-370; it reads GFFAAVASGT…IAPTLGEFTK (290 aa). Asn149 carries N-linked (GlcNAc...) asparagine glycosylation. 4 helical membrane passes run 202–222, 226–246, 314–334, and 344–364; these read VGTC…AFTQ, LTLP…ITVA, EFFI…KLLL, and ILTV…IAPT. One can recognise an ABC transporter 1 domain in the interval 405-650; the sequence is LELSNAVFSY…KGQYWSLVNA (246 aa). Residue 440–447 participates in ATP binding; the sequence is GASGSGKS. Asn494 carries an N-linked (GlcNAc...) asparagine glycan. The interval 656-691 is disordered; the sequence is ASDDSSSDTDKETDTQPAEILEKHATTKSTHSKVPH. Residues 663–680 show a composition bias toward basic and acidic residues; sequence DTDKETDTQPAEILEKHA. The next 2 membrane-spanning stretches (helical) occupy residues 720-740 and 768-788; these read HWLF…AFPA and LMFF…GFFL. In terms of domain architecture, ABC transmembrane type-1 2 spans 725 to 1012; the sequence is LLGGIASVVS…IFGFTMNTTK (288 aa). The N-linked (GlcNAc...) asparagine glycan is linked to Asn820. 4 helical membrane-spanning segments follow: residues 844 to 864, 866 to 886, 949 to 969, and 986 to 1006; these read IGLI…ALVT, WKLA…AGFI, IAMI…ALAF, and FFVI…IFGF. Residues Asn1009, Asn1031, and Asn1052 are each glycosylated (N-linked (GlcNAc...) asparagine). The region spanning 1048-1285 is the ABC transporter 2 domain; that stretch reads VEFRNVSFSY…KGRYFEMCKA (238 aa). 1083-1090 provides a ligand contact to ATP; the sequence is GPSGCGKT.

This sequence belongs to the ABC transporter superfamily. ABCB family. Multidrug resistance exporter (TC 3.A.1.201) subfamily.

It is found in the cell membrane. It catalyses the reaction itraconazole(in) + ATP + H2O = itraconazole(out) + ADP + phosphate + H(+). Its function is as follows. Pleiotropic ABC efflux transporter involved in the modulation susceptibility to itraconazole. This Trichophyton rubrum (strain ATCC MYA-4607 / CBS 118892) (Athlete's foot fungus) protein is ABC multidrug transporter MDR5.